Consider the following 163-residue polypeptide: Phosphopantetheine adenylyltransferase (163 aa).

Residue T9 participates in substrate binding. Residues 9-10 (TF) and H17 each bind ATP. Substrate contacts are provided by K41, T73, and R87. ATP contacts are provided by residues 88–90 (GLR), E98, and 123–129 (FSFISSS).

This sequence belongs to the bacterial CoaD family. In terms of assembly, homohexamer. The cofactor is Mg(2+).

It localises to the cytoplasm. The catalysed reaction is (R)-4'-phosphopantetheine + ATP + H(+) = 3'-dephospho-CoA + diphosphate. It participates in cofactor biosynthesis; coenzyme A biosynthesis; CoA from (R)-pantothenate: step 4/5. Its function is as follows. Reversibly transfers an adenylyl group from ATP to 4'-phosphopantetheine, yielding dephospho-CoA (dPCoA) and pyrophosphate. In Desulfitobacterium hafniense (strain Y51), this protein is Phosphopantetheine adenylyltransferase.